The following is a 294-amino-acid chain: Acetylglutamate kinase (294 aa).

Residues 63-64 (GG), Arg85, and Asn188 contribute to the substrate site.

This sequence belongs to the acetylglutamate kinase family. ArgB subfamily.

Its subcellular location is the cytoplasm. It catalyses the reaction N-acetyl-L-glutamate + ATP = N-acetyl-L-glutamyl 5-phosphate + ADP. The protein operates within amino-acid biosynthesis; L-arginine biosynthesis; N(2)-acetyl-L-ornithine from L-glutamate: step 2/4. Catalyzes the ATP-dependent phosphorylation of N-acetyl-L-glutamate. This is Acetylglutamate kinase from Methanococcus maripaludis (strain C5 / ATCC BAA-1333).